The following is a 141-amino-acid chain: Putative nickel-responsive regulator (141 aa).

4 residues coordinate Ni(2+): His-80, His-91, His-93, and Cys-99.

The protein belongs to the transcriptional regulatory CopG/NikR family. It depends on Ni(2+) as a cofactor.

Functionally, transcriptional regulator. This is Putative nickel-responsive regulator from Methanococcus aeolicus (strain ATCC BAA-1280 / DSM 17508 / OCM 812 / Nankai-3).